The following is a 396-amino-acid chain: S100P-binding protein (396 aa).

The segment at 145-249 is disordered; the sequence is CDPVLDKDKI…RKNSGSHKSG (105 aa). Basic and acidic residues-rich tracts occupy residues 148–161 and 168–185; these read VLDK…KETE and EQTR…RCTE. Polar residues-rich tracts occupy residues 202-215 and 227-246; these read SSPS…TASD and VFSQ…SGSH.

Interacts with S100P.

It is found in the nucleus. The chain is S100P-binding protein from Mus musculus (Mouse).